Consider the following 505-residue polypeptide: Trans-cinnamate 4-monooxygenase (505 aa).

Residues 3-23 (LLLLEKSLIAVFVAVILATVI) traverse the membrane as a helical segment. (E)-cinnamate is bound by residues 213-218 (RSRLAQ) and A306. C447 contacts heme.

Belongs to the cytochrome P450 family. The cofactor is heme. As to expression, expressed in roots, leaves, stems, flowers and siliques.

The protein localises to the membrane. The catalysed reaction is (E)-cinnamate + reduced [NADPH--hemoprotein reductase] + O2 = (E)-4-coumarate + oxidized [NADPH--hemoprotein reductase] + H2O + H(+). It participates in phenylpropanoid metabolism; trans-4-coumarate biosynthesis; trans-4-coumarate from trans-cinnamate: step 1/1. Catalyzes the first oxidative step of the phenylpropanoid pathway in higher plants by transforming trans-cinnamate into p-coumarate. The compounds formed by this pathway are essential components for lignification, pollination, and defense against ultraviolet light, predators and pathogens. The sequence is that of Trans-cinnamate 4-monooxygenase from Arabidopsis thaliana (Mouse-ear cress).